The chain runs to 139 residues: Large-conductance mechanosensitive channel (139 aa).

The next 3 helical transmembrane spans lie at 10-30, 40-60, and 80-100; these read FAVK…AAFG, VIMP…YYIA, and LAYG…FIIF.

It belongs to the MscL family. Homopentamer.

It localises to the cell inner membrane. Its function is as follows. Channel that opens in response to stretch forces in the membrane lipid bilayer. May participate in the regulation of osmotic pressure changes within the cell. The protein is Large-conductance mechanosensitive channel of Janthinobacterium sp. (strain Marseille) (Minibacterium massiliensis).